The primary structure comprises 610 residues: DNA-directed RNA polymerase III subunit RPC3 (610 aa).

The leucine-zipper stretch occupies residues 538–559 (LVYNMAEIVRNIQNFKMENKIL).

The protein belongs to the RNA polymerase beta chain family. As to quaternary structure, component of the RNA polymerase III (Pol III) complex consisting of 17 subunits.

It is found in the nucleus. Its function is as follows. DNA-dependent RNA polymerase catalyzes the transcription of DNA into RNA using the four ribonucleoside triphosphates as substrates. Specific core component of RNA polymerase III which synthesizes small RNAs, such as 5S rRNA and tRNAs. The protein is DNA-directed RNA polymerase III subunit RPC3 (RPC82) of Lodderomyces elongisporus (strain ATCC 11503 / CBS 2605 / JCM 1781 / NBRC 1676 / NRRL YB-4239) (Yeast).